Consider the following 315-residue polypeptide: Coproporphyrin III ferrochelatase (315 aa).

Fe-coproporphyrin III-binding positions include tyrosine 13, arginine 30, 46-47 (RY), serine 54, and tyrosine 125. 2 residues coordinate Fe(2+): histidine 183 and glutamate 264.

The protein belongs to the ferrochelatase family.

The protein localises to the cytoplasm. It carries out the reaction Fe-coproporphyrin III + 2 H(+) = coproporphyrin III + Fe(2+). It participates in porphyrin-containing compound metabolism; protoheme biosynthesis. Its function is as follows. Involved in coproporphyrin-dependent heme b biosynthesis. Catalyzes the insertion of ferrous iron into coproporphyrin III to form Fe-coproporphyrin III. The protein is Coproporphyrin III ferrochelatase of Anoxybacillus flavithermus (strain DSM 21510 / WK1).